Here is a 289-residue protein sequence, read N- to C-terminus: MLRDLFVKKKKYAAIPSEQVRKDVPDGVMTKCPECKKIMYTKELLKNLKVCVNCGYHHPMNAWERLDSILDEGSFREYDKEMVSLNPLEFPGYEEKLESDRKKTELNEAVVTGEGTIDDMLVVVAVMDSRFRMGSMGSVVGEKIARAVEKAYDLQVPFIIFTASGGARMQEGILSLMQMAKTSVALKKHSNAGGLFISVMTHPTTGGVSASFASLGDYNLAEPGALIGFAGRRVIEQTVREKLPEDFQTAEFLLDHGQLDAVVHRDDMRESLRKILEVHQGGEMAVWQS.

Residues 28-289 enclose the CoA carboxyltransferase N-terminal domain; it reads VMTKCPECKK…QGGEMAVWQS (262 aa). Zn(2+)-binding residues include Cys32, Cys35, Cys51, and Cys54. A C4-type zinc finger spans residues 32–54; it reads CPECKKIMYTKELLKNLKVCVNC.

It belongs to the AccD/PCCB family. In terms of assembly, acetyl-CoA carboxylase is a heterohexamer composed of biotin carboxyl carrier protein (AccB), biotin carboxylase (AccC) and two subunits each of ACCase subunit alpha (AccA) and ACCase subunit beta (AccD). It depends on Zn(2+) as a cofactor.

The protein localises to the cytoplasm. It catalyses the reaction N(6)-carboxybiotinyl-L-lysyl-[protein] + acetyl-CoA = N(6)-biotinyl-L-lysyl-[protein] + malonyl-CoA. Its pathway is lipid metabolism; malonyl-CoA biosynthesis; malonyl-CoA from acetyl-CoA: step 1/1. In terms of biological role, component of the acetyl coenzyme A carboxylase (ACC) complex. Biotin carboxylase (BC) catalyzes the carboxylation of biotin on its carrier protein (BCCP) and then the CO(2) group is transferred by the transcarboxylase to acetyl-CoA to form malonyl-CoA. The protein is Acetyl-coenzyme A carboxylase carboxyl transferase subunit beta of Bacillus cereus (strain ATCC 14579 / DSM 31 / CCUG 7414 / JCM 2152 / NBRC 15305 / NCIMB 9373 / NCTC 2599 / NRRL B-3711).